Reading from the N-terminus, the 164-residue chain is Phosphatidyl-N-methylethanolamine N-methyltransferase (164 aa).

Residues 1–21 constitute an intramembrane region (helical); sequence MGLLAAIGVLLPFPFYWWLWT. Residues 22 to 30 are Lumenal-facing; that stretch reads NAQSWVNLC. Residues 31 to 52 form a helical membrane-spanning segment; that stretch reads GRERDPSTVMARVSHVLKAAQL. The Cytoplasmic segment spans residues 53–69; sequence LSLFSVASLSWPPPLYF. A helical membrane pass occupies residues 70 to 90; sequence WPLMAFGQFLNFRVYQLLGEA. 74-76 provides a ligand contact to S-adenosyl-L-methionine; that stretch reads AFG. The Lumenal segment spans residues 91–131; that stretch reads GTYYGVRFGKNIPWVTEFPFGVIRDPQYVGSIMSLLACLSW. A helical membrane pass occupies residues 132–151; that stretch reads VPFQYILLWSLGYVFMMFLE. The Cytoplasmic segment spans residues 152–164; it reads SKEDPNARAKSIS. 154–155 lines the S-adenosyl-L-methionine pocket; that stretch reads ED.

It belongs to the class VI-like SAM-binding methyltransferase superfamily. PEMT/PEM2 methyltransferase family.

Its subcellular location is the endoplasmic reticulum membrane. The catalysed reaction is a 1,2-diacyl-sn-glycero-3-phospho-N-methylethanolamine + S-adenosyl-L-methionine = a 1,2-diacyl-sn-glycero-3-phospho-N,N-dimethylethanolamine + S-adenosyl-L-homocysteine + H(+). It carries out the reaction a 1,2-diacyl-sn-glycero-3-phospho-N,N-dimethylethanolamine + S-adenosyl-L-methionine = a 1,2-diacyl-sn-glycero-3-phosphocholine + S-adenosyl-L-homocysteine + H(+). The protein operates within phospholipid metabolism; phosphatidylcholine biosynthesis. Its function is as follows. Catalyzes the second two steps of the methylation pathway of phosphatidylcholine biosynthesis, the SAM-dependent methylation of phosphatidylmonomethylethanolamine (PMME) to phosphatidyldimethylethanolamine (PDME) and of PDME to phosphatidylcholine (PC). This chain is Phosphatidyl-N-methylethanolamine N-methyltransferase (PLMT), found in Arabidopsis thaliana (Mouse-ear cress).